A 403-amino-acid polypeptide reads, in one-letter code: Probable tRNA sulfurtransferase (403 aa).

The THUMP domain maps to 61-166 (EAIAESLKDV…SGYSYIMCDE (106 aa)). ATP-binding positions include 184-185 (LL), 209-210 (HF), R266, G288, and Q297.

This sequence belongs to the ThiI family.

It is found in the cytoplasm. It catalyses the reaction [ThiI sulfur-carrier protein]-S-sulfanyl-L-cysteine + a uridine in tRNA + 2 reduced [2Fe-2S]-[ferredoxin] + ATP + H(+) = [ThiI sulfur-carrier protein]-L-cysteine + a 4-thiouridine in tRNA + 2 oxidized [2Fe-2S]-[ferredoxin] + AMP + diphosphate. The enzyme catalyses [ThiS sulfur-carrier protein]-C-terminal Gly-Gly-AMP + S-sulfanyl-L-cysteinyl-[cysteine desulfurase] + AH2 = [ThiS sulfur-carrier protein]-C-terminal-Gly-aminoethanethioate + L-cysteinyl-[cysteine desulfurase] + A + AMP + 2 H(+). The protein operates within cofactor biosynthesis; thiamine diphosphate biosynthesis. Catalyzes the ATP-dependent transfer of a sulfur to tRNA to produce 4-thiouridine in position 8 of tRNAs, which functions as a near-UV photosensor. Also catalyzes the transfer of sulfur to the sulfur carrier protein ThiS, forming ThiS-thiocarboxylate. This is a step in the synthesis of thiazole, in the thiamine biosynthesis pathway. The sulfur is donated as persulfide by IscS. The chain is Probable tRNA sulfurtransferase from Bacillus cytotoxicus (strain DSM 22905 / CIP 110041 / 391-98 / NVH 391-98).